Consider the following 835-residue polypeptide: MIGILKKVFDVNQRQIKRMQKTVEQIDALESSIKPLTDEQLKGKTLEFKERLTKGETVDDLLPEAFAVVREAATRVLGMRPYGVQLMGGIALHEGNISEMKTGEGKTLTSTLPVYLNALTGKGVHVVTVNEYLAQRDASEMGQLHEFLGLTVGINLNSMSREEKQEAYAADITYSTNNELGFDYLRDNMVLYKEQCVQRPLHFAIIDEVDSILVDEARTPLIISGQAQKSTELYMFANAFVRTLENEKDYSFDVKTKNVMLTEDGITKAEKAFHIENLFDLKHVALLHHINQALRAHVVMHRDTDYVVQEGEIVIVDQFTGRLMKGRRYSEGLHQAIEAKEGVEIQNESMTLATITFQNYFRMYEKLSGMTGTAKTEEEEFRNIYNMNVIVIPTNKPIIRDDRADLIFKSMEGKFNAVVEDIVNRHKQGQPVLVGTVAIETSELISKMLTRKGVRHNILNAKNHAREADIIAEAGMKGAVTIATNMAGRGTDIKLGDDIKNIGLAVIGTERHESRRIDNQLRGRAGRQGDPGVTQFYLSMEDELMRRFGSDNMKAMMDRLGMDDSQPIESKMVSRAVESAQKRVEGNNYDARKQLLQYDDVLRQQREVIYKQRQEVMESENLRGIIEGMMKSTVERAVALHTQEEIEEDWNIKGLVDYLNTNLLQEGDVKEEELRRLAPEEMSEPIIAKLIERYNDKEKLMPEEQMREFEKVVVFRVVDTKWTEHIDAMDHLREGIHLRAYGQIDPLREYQMEGFAMFESMIASIEEEISRYIMKAEIEQNLERQEVVQGEAVHPSSDGEEAKKKPVVKGDQVGRNDLCKCGSGKKYKNCCGIGK.

ATP is bound by residues Gln-85, 103 to 107, and Asp-492; that span reads GEGKT. The segment at 788–807 is disordered; sequence VQGEAVHPSSDGEEAKKKPV. Positions 819, 821, 830, and 831 each coordinate Zn(2+).

It belongs to the SecA family. In terms of assembly, monomer and homodimer. Part of the essential Sec protein translocation apparatus which comprises SecA, SecYEG and auxiliary proteins SecDF. Other proteins may also be involved. Requires Zn(2+) as cofactor.

It is found in the cell membrane. The protein localises to the cytoplasm. It carries out the reaction ATP + H2O + cellular proteinSide 1 = ADP + phosphate + cellular proteinSide 2.. Its function is as follows. Part of the Sec protein translocase complex. Interacts with the SecYEG preprotein conducting channel. Has a central role in coupling the hydrolysis of ATP to the transfer of proteins into and across the cell membrane, serving as an ATP-driven molecular motor driving the stepwise translocation of polypeptide chains across the membrane. The chain is Protein translocase subunit SecA 1 from Bacillus thuringiensis (strain Al Hakam).